A 46-amino-acid chain; its full sequence is GTP cyclohydrolase 1 (46 aa).

Cys-7 provides a ligand contact to Zn(2+).

The protein belongs to the GTP cyclohydrolase I family. Homomer.

The catalysed reaction is GTP + H2O = 7,8-dihydroneopterin 3'-triphosphate + formate + H(+). It functions in the pathway cofactor biosynthesis; 7,8-dihydroneopterin triphosphate biosynthesis; 7,8-dihydroneopterin triphosphate from GTP: step 1/1. The sequence is that of GTP cyclohydrolase 1 (folE) from Bacillus pumilus (Bacillus mesentericus).